We begin with the raw amino-acid sequence, 439 residues long: GTPase Der (439 aa).

2 consecutive EngA-type G domains span residues 4 to 168 and 177 to 352; these read PIVA…KDDE and INIA…DNYT. GTP-binding positions include 10 to 17, 57 to 61, 120 to 123, 183 to 190, 230 to 234, and 295 to 298; these read GRPNVGKS, DTGGI, NKID, GKPNVGKS, DTAGL, and NKWD. The 85-residue stretch at 353 to 437 folds into the KH-like domain; it reads KRVKTGVLND…GIKLEFRERK (85 aa).

It belongs to the TRAFAC class TrmE-Era-EngA-EngB-Septin-like GTPase superfamily. EngA (Der) GTPase family. Associates with the 50S ribosomal subunit.

Functionally, GTPase that plays an essential role in the late steps of ribosome biogenesis. This chain is GTPase Der, found in Clostridium botulinum (strain Kyoto / Type A2).